Reading from the N-terminus, the 292-residue chain is Ribosomal RNA small subunit methyltransferase A (292 aa).

Asparagine 28, leucine 30, glycine 55, glutamate 76, aspartate 101, and asparagine 126 together coordinate S-adenosyl-L-methionine.

Belongs to the class I-like SAM-binding methyltransferase superfamily. rRNA adenine N(6)-methyltransferase family. RsmA subfamily.

It localises to the cytoplasm. It catalyses the reaction adenosine(1518)/adenosine(1519) in 16S rRNA + 4 S-adenosyl-L-methionine = N(6)-dimethyladenosine(1518)/N(6)-dimethyladenosine(1519) in 16S rRNA + 4 S-adenosyl-L-homocysteine + 4 H(+). In terms of biological role, specifically dimethylates two adjacent adenosines (A1518 and A1519) in the loop of a conserved hairpin near the 3'-end of 16S rRNA in the 30S particle. May play a critical role in biogenesis of 30S subunits. The sequence is that of Ribosomal RNA small subunit methyltransferase A from Bacillus cereus (strain G9842).